The chain runs to 398 residues: Lipase member K (398 aa).

Residues 1-19 form the signal peptide; the sequence is MWWLLATTCCVLLSGPIDG. The AB hydrolase-1 domain maps to 78-377; it reads VVYLQHGLIA…HYNHMDFYLG (300 aa). Ser171 serves as the catalytic Nucleophile. Cysteines 245 and 254 form a disulfide. N-linked (GlcNAc...) asparagine glycans are attached at residues Asn270 and Asn326. Active-site charge relay system residues include Asp342 and His371.

This sequence belongs to the AB hydrolase superfamily. Lipase family.

The protein localises to the secreted. Plays a highly specific role in the last step of keratinocyte differentiation. May have an essential function in lipid metabolism of the most differentiated epidermal layers. The protein is Lipase member K (Lipk) of Mus musculus (Mouse).